Consider the following 120-residue polypeptide: UPF0231 protein YacL (120 aa).

The protein belongs to the UPF0231 family.

In Escherichia coli O139:H28 (strain E24377A / ETEC), this protein is UPF0231 protein YacL.